A 321-amino-acid chain; its full sequence is MLNKIIERENLSFEESYELFNMLLNESEMRIAAYLVALQTKGVTADEIAGFAKAMRDNAVKIDLGEVTDTCGTGGDGSKTINVSTAVSIILSCFTKVAKHGNVSITSKSGSANVYEALGCKIPETPDDAKKSMEKTNFAFLFAPKYHPTLKKIMPVRNELKVKTIFNILGPLANPANPKYQILGVNSAELSENVAIALSKVGGIKKALVVYGNGLDELTPNGTSKITEYDGKFDTYEVTPKDFGLDYSKIRPCESPDESAKRLIDVFSGKINDDRNFILMNAAGALYTSEIASDFLDGVEIAKEAIESGKVLKKLEEIRNV.

Residues glycine 72, 75–76 (GD), threonine 80, 82–85 (NVST), 99–107 (KHGNVSITS), and serine 111 each bind 5-phospho-alpha-D-ribose 1-diphosphate. Glycine 72 contacts anthranilate. Serine 84 serves as a coordination point for Mg(2+). Asparagine 102 lines the anthranilate pocket. Residue arginine 157 participates in anthranilate binding. 2 residues coordinate Mg(2+): aspartate 216 and glutamate 217.

It belongs to the anthranilate phosphoribosyltransferase family. In terms of assembly, homodimer. It depends on Mg(2+) as a cofactor.

It catalyses the reaction N-(5-phospho-beta-D-ribosyl)anthranilate + diphosphate = 5-phospho-alpha-D-ribose 1-diphosphate + anthranilate. It participates in amino-acid biosynthesis; L-tryptophan biosynthesis; L-tryptophan from chorismate: step 2/5. Its function is as follows. Catalyzes the transfer of the phosphoribosyl group of 5-phosphorylribose-1-pyrophosphate (PRPP) to anthranilate to yield N-(5'-phosphoribosyl)-anthranilate (PRA). In Methanococcus maripaludis (strain C6 / ATCC BAA-1332), this protein is Anthranilate phosphoribosyltransferase.